The chain runs to 88 residues: Small ribosomal subunit protein uS17 (88 aa).

This sequence belongs to the universal ribosomal protein uS17 family. Part of the 30S ribosomal subunit.

Functionally, one of the primary rRNA binding proteins, it binds specifically to the 5'-end of 16S ribosomal RNA. In Pseudomonas fluorescens (strain ATCC BAA-477 / NRRL B-23932 / Pf-5), this protein is Small ribosomal subunit protein uS17.